The sequence spans 77 residues: uncharacterized protein (77 aa).

The protein localises to the plastid. The protein resides in the cyanelle. This is an uncharacterized protein from Cyanophora paradoxa.